A 439-amino-acid chain; its full sequence is Ribosomal protein uS12 methylthiotransferase RimO (439 aa).

The MTTase N-terminal domain occupies 1 to 117; sequence MNIGFISLGC…IAGVVNRIAQ (117 aa). Residues Cys10, Cys46, Cys80, Cys154, Cys158, and Cys161 each contribute to the [4Fe-4S] cluster site. A Radical SAM core domain is found at 140–370; that stretch reads TTPPGSAYLK…LRLQQKITRQ (231 aa). The 67-residue stretch at 373–439 folds into the TRAM domain; it reads LARINTQEKV…RNYDMIGEYQ (67 aa).

This sequence belongs to the methylthiotransferase family. RimO subfamily. The cofactor is [4Fe-4S] cluster.

The protein resides in the cytoplasm. The catalysed reaction is L-aspartate(89)-[ribosomal protein uS12]-hydrogen + (sulfur carrier)-SH + AH2 + 2 S-adenosyl-L-methionine = 3-methylsulfanyl-L-aspartate(89)-[ribosomal protein uS12]-hydrogen + (sulfur carrier)-H + 5'-deoxyadenosine + L-methionine + A + S-adenosyl-L-homocysteine + 2 H(+). Its function is as follows. Catalyzes the methylthiolation of an aspartic acid residue of ribosomal protein uS12. This chain is Ribosomal protein uS12 methylthiotransferase RimO, found in Syntrophomonas wolfei subsp. wolfei (strain DSM 2245B / Goettingen).